Consider the following 176-residue polypeptide: NAD(P)H-quinone oxidoreductase subunit 6, chloroplastic (176 aa).

5 helical membrane-spanning segments follow: residues 10–30 (FLLVFLGSGLILGGLGVVLLP), 32–52 (PIYSAFSLGLVLVCTSLFYIL), 61–81 (AQLLIYVGAINVLIIFAVMFM), 92–112 (LWTVGDGITSMVCISLFISLI), and 152–172 (FFLPFELISIILLDALIGAIA).

This sequence belongs to the complex I subunit 6 family. As to quaternary structure, NDH is composed of at least 16 different subunits, 5 of which are encoded in the nucleus.

Its subcellular location is the plastid. The protein localises to the chloroplast thylakoid membrane. The enzyme catalyses a plastoquinone + NADH + (n+1) H(+)(in) = a plastoquinol + NAD(+) + n H(+)(out). It catalyses the reaction a plastoquinone + NADPH + (n+1) H(+)(in) = a plastoquinol + NADP(+) + n H(+)(out). NDH shuttles electrons from NAD(P)H:plastoquinone, via FMN and iron-sulfur (Fe-S) centers, to quinones in the photosynthetic chain and possibly in a chloroplast respiratory chain. The immediate electron acceptor for the enzyme in this species is believed to be plastoquinone. Couples the redox reaction to proton translocation, and thus conserves the redox energy in a proton gradient. The polypeptide is NAD(P)H-quinone oxidoreductase subunit 6, chloroplastic (ndhG) (Atropa belladonna (Belladonna)).